The following is a 437-amino-acid chain: Glutamyl-tRNA reductase (437 aa).

Residues 49–52 (TCNR), serine 109, 114–116 (EVQ), and glutamine 120 contribute to the substrate site. Residue cysteine 50 is the Nucleophile of the active site. Residue 189-194 (GAGDTA) coordinates NADP(+).

This sequence belongs to the glutamyl-tRNA reductase family. In terms of assembly, homodimer.

It carries out the reaction (S)-4-amino-5-oxopentanoate + tRNA(Glu) + NADP(+) = L-glutamyl-tRNA(Glu) + NADPH + H(+). It participates in porphyrin-containing compound metabolism; protoporphyrin-IX biosynthesis; 5-aminolevulinate from L-glutamyl-tRNA(Glu): step 1/2. Its pathway is porphyrin-containing compound metabolism; chlorophyll biosynthesis. In terms of biological role, catalyzes the NADPH-dependent reduction of glutamyl-tRNA(Glu) to glutamate 1-semialdehyde (GSA). The sequence is that of Glutamyl-tRNA reductase from Chloroherpeton thalassium (strain ATCC 35110 / GB-78).